Consider the following 394-residue polypeptide: Small RNA 2'-O-methyltransferase (394 aa).

2 residues coordinate S-adenosyl-L-methionine: Asp78 and Ser114. Positions 132, 135, 136, and 181 each coordinate Mg(2+).

The protein belongs to the methyltransferase superfamily. HEN1 family. It depends on Mg(2+) as a cofactor.

The protein localises to the cytoplasm. It catalyses the reaction small RNA 3'-end nucleotide + S-adenosyl-L-methionine = small RNA 3'-end 2'-O-methylnucleotide + S-adenosyl-L-homocysteine + H(+). Its function is as follows. Methyltransferase that adds a 2'-O-methyl group at the 3'-end of piRNAs, a class of 24 to 30 nucleotide RNAs that are generated by a Dicer-independent mechanism and are primarily derived from transposons and other repeated sequence elements. This probably protects the 3'-end of piRNAs from uridylation activity and subsequent degradation. Stabilization of piRNAs is essential for gametogenesis. The sequence is that of Small RNA 2'-O-methyltransferase (Henmt1) from Rattus norvegicus (Rat).